Consider the following 82-residue polypeptide: Probable tautomerase XF_1725 (82 aa).

Proline 2 serves as the catalytic Proton acceptor; via imino nitrogen.

It belongs to the 4-oxalocrotonate tautomerase family.

This is Probable tautomerase XF_1725 from Xylella fastidiosa (strain 9a5c).